Consider the following 293-residue polypeptide: Undecaprenyl-diphosphatase (293 aa).

The next 7 membrane-spanning stretches (helical) occupy residues 3–23 (IALA…EFLP), 43–63 (KGKI…CWEF), 85–105 (INVI…GKAI), 109–129 (LFNP…ILWA), 203–223 (VATE…TVYE), 238–258 (IFAV…RWLL), and 269–289 (FAWY…THLI).

Belongs to the UppP family.

Its subcellular location is the cell inner membrane. The enzyme catalyses di-trans,octa-cis-undecaprenyl diphosphate + H2O = di-trans,octa-cis-undecaprenyl phosphate + phosphate + H(+). In terms of biological role, catalyzes the dephosphorylation of undecaprenyl diphosphate (UPP). Confers resistance to bacitracin. The chain is Undecaprenyl-diphosphatase from Ralstonia pickettii (strain 12J).